A 153-amino-acid polypeptide reads, in one-letter code: Proline-rich membrane anchor 1 (153 aa).

Residues 1–35 form the signal peptide; sequence MLLRDLVPRHGCCWPSLLLHCALHPLWGLVQVTHA. The Extracellular segment spans residues 36-92; it reads EPQKSCSKVTDSCQHICQCRPPPPLPPPPPPPPPPRLLSAPAPNSTSCPAEDSWWSG. In terms of domain architecture, PRAD spans 56-70; that stretch reads PPPPLPPPPPPPPPP. Pro residues predominate over residues 59–71; the sequence is PLPPPPPPPPPPR. The segment at 59–79 is disordered; that stretch reads PLPPPPPPPPPPRLLSAPAPN. Asparagine 79 carries N-linked (GlcNAc...) asparagine glycosylation. The helical transmembrane segment at 93–113 threads the bilayer; the sequence is LVIIVAVVCASLVFLTVLVII. At 114–153 the chain is on the cytoplasmic side; it reads CYKAIKRKPLRKDENGTSVAEYPMSSSQSHKGVDVNAAVV. Positions 129-153 are disordered; the sequence is GTSVAEYPMSSSQSHKGVDVNAAVV.

In terms of assembly, interacts with ACHE, probably through disulfide bonds. In terms of tissue distribution, predominantly expressed in the central nervous system, including in the brain. Also expressed in muscle, heart and kidney. Isoform 1 may be predominant in the cortex and striatum, while isoform 2 is more abundant in the cerebellum.

Its subcellular location is the cell membrane. The protein localises to the cell junction. It localises to the synapse. In terms of biological role, required to anchor acetylcholinesterase (ACHE) to the basal lamina of the neuromuscular junction and to the membrane of neuronal synapses in brain. Also able to organize ACHE into tetramers. The chain is Proline-rich membrane anchor 1 (Prima1) from Mus musculus (Mouse).